An 830-amino-acid polypeptide reads, in one-letter code: Periplasmic nitrate reductase 2 (830 aa).

Positions Met1–Asn31 form a signal peptide, tat-type signal. Residues Ile41 to Asp97 enclose the 4Fe-4S Mo/W bis-MGD-type domain. [4Fe-4S] cluster-binding residues include Cys48, Cys51, Cys55, and Cys83. Mo-bis(molybdopterin guanine dinucleotide) is bound by residues Lys85, Gln152, Asn177, Cys181, Ser245–His249, Gln264–Asp266, Met374, Gln378, Asn484, Ser510–Glu511, Lys533, Asp560, and Thr720–Ser729. Trp796 contacts substrate. Mo-bis(molybdopterin guanine dinucleotide) is bound by residues Asn804 and Lys821.

This sequence belongs to the prokaryotic molybdopterin-containing oxidoreductase family. NasA/NapA/NarB subfamily. As to quaternary structure, component of the periplasmic nitrate reductase NapAB complex composed of NapA and NapB. Requires [4Fe-4S] cluster as cofactor. Mo-bis(molybdopterin guanine dinucleotide) serves as cofactor. In terms of processing, predicted to be exported by the Tat system. The position of the signal peptide cleavage has not been experimentally proven.

It localises to the periplasm. The enzyme catalyses 2 Fe(II)-[cytochrome] + nitrate + 2 H(+) = 2 Fe(III)-[cytochrome] + nitrite + H2O. In terms of biological role, catalytic subunit of the periplasmic nitrate reductase complex NapAB. Receives electrons from NapB and catalyzes the reduction of nitrate to nitrite. The sequence is that of Periplasmic nitrate reductase 2 from Photobacterium profundum (strain SS9).